Consider the following 270-residue polypeptide: Formamidopyrimidine-DNA glycosylase (270 aa).

The active-site Schiff-base intermediate with DNA is the proline 2. Glutamate 3 functions as the Proton donor in the catalytic mechanism. Lysine 58 functions as the Proton donor; for beta-elimination activity in the catalytic mechanism. DNA is bound by residues histidine 91, arginine 110, and arginine 151. Residues 236–270 (FAYGRAGEFCKVCGTTLREVKLGQRASVYCPRCQR) form an FPG-type zinc finger. Catalysis depends on arginine 260, which acts as the Proton donor; for delta-elimination activity.

This sequence belongs to the FPG family. In terms of assembly, monomer. The cofactor is Zn(2+).

It catalyses the reaction Hydrolysis of DNA containing ring-opened 7-methylguanine residues, releasing 2,6-diamino-4-hydroxy-5-(N-methyl)formamidopyrimidine.. The enzyme catalyses 2'-deoxyribonucleotide-(2'-deoxyribose 5'-phosphate)-2'-deoxyribonucleotide-DNA = a 3'-end 2'-deoxyribonucleotide-(2,3-dehydro-2,3-deoxyribose 5'-phosphate)-DNA + a 5'-end 5'-phospho-2'-deoxyribonucleoside-DNA + H(+). Its function is as follows. Involved in base excision repair of DNA damaged by oxidation or by mutagenic agents. Acts as a DNA glycosylase that recognizes and removes damaged bases. Has a preference for oxidized purines, such as 7,8-dihydro-8-oxoguanine (8-oxoG). Has AP (apurinic/apyrimidinic) lyase activity and introduces nicks in the DNA strand. Cleaves the DNA backbone by beta-delta elimination to generate a single-strand break at the site of the removed base with both 3'- and 5'-phosphates. The sequence is that of Formamidopyrimidine-DNA glycosylase from Ectopseudomonas mendocina (strain ymp) (Pseudomonas mendocina).